A 303-amino-acid polypeptide reads, in one-letter code: Probable cell division protein WhiA (303 aa).

Residues 272 to 303 (SIQQLADSLSKPLTKSGVNHRLRKINKIADEL) constitute a DNA-binding region (H-T-H motif).

This sequence belongs to the WhiA family.

In terms of biological role, involved in cell division and chromosome segregation. In Streptococcus gordonii (strain Challis / ATCC 35105 / BCRC 15272 / CH1 / DL1 / V288), this protein is Probable cell division protein WhiA.